A 220-amino-acid chain; its full sequence is Protein-L-isoaspartate O-methyltransferase (220 aa).

The active site involves Ser64.

This sequence belongs to the methyltransferase superfamily. L-isoaspartyl/D-aspartyl protein methyltransferase family.

It is found in the cytoplasm. The enzyme catalyses [protein]-L-isoaspartate + S-adenosyl-L-methionine = [protein]-L-isoaspartate alpha-methyl ester + S-adenosyl-L-homocysteine. Its function is as follows. Catalyzes the methyl esterification of L-isoaspartyl residues in peptides and proteins that result from spontaneous decomposition of normal L-aspartyl and L-asparaginyl residues. It plays a role in the repair and/or degradation of damaged proteins. This Methanoculleus marisnigri (strain ATCC 35101 / DSM 1498 / JR1) protein is Protein-L-isoaspartate O-methyltransferase.